Consider the following 455-residue polypeptide: Probable pectate lyase 6 (455 aa).

The first 25 residues, 1-25 (MVNLGSYVFVFVALSLTVVVPSVQA), serve as a signal peptide directing secretion. Asn55 and Asn75 each carry an N-linked (GlcNAc...) asparagine glycan. Ca(2+) contacts are provided by Asp247, Asp271, and Asp275. The active site involves Arg327.

Belongs to the polysaccharide lyase 1 family. It depends on Ca(2+) as a cofactor.

The enzyme catalyses Eliminative cleavage of (1-&gt;4)-alpha-D-galacturonan to give oligosaccharides with 4-deoxy-alpha-D-galact-4-enuronosyl groups at their non-reducing ends.. It functions in the pathway glycan metabolism; pectin degradation; 2-dehydro-3-deoxy-D-gluconate from pectin: step 2/5. This is Probable pectate lyase 6 from Arabidopsis thaliana (Mouse-ear cress).